The following is a 451-amino-acid chain: Golgi reassembly-stacking protein 2 (451 aa).

Glycine 2 is lipidated: N-myristoyl glycine. 2 consecutive PDZ GRASP-type domains span residues 15–105 and 111–199; these read EGYH…FCSF and NVWH…YGYL. The tract at residues 15–215 is GRASP; sequence EGYHVLRVQE…PFEEGKKISL (201 aa). Dimethylated arginine is present on residues arginine 30 and arginine 47. The important for membrane binding stretch occupies residues 194–199; sequence IGYGYL. At serine 214 the chain carries Phosphoserine. Threonine 222 carries the post-translational modification Phosphothreonine. A Phosphothreonine; by MAPK modification is found at threonine 225. The span at 236 to 252 shows a compositional bias: low complexity; sequence LSSVSPPSLSPPGTTGV. 2 disordered regions span residues 236–255 and 377–451; these read LSSV…VEQS and EGSS…SEPS. Residues 410–424 are compositionally biased toward polar residues; that stretch reads SSLTVDVTSPASKVP. Position 411 is a phosphoserine (serine 411). 2 positions are modified to phosphothreonine: threonine 417 and threonine 435. 2 positions are modified to phosphoserine: serine 443 and serine 448.

It belongs to the GORASP family. As to quaternary structure, homodimer. Homooligomer. ER stress induces phosphorylation-dependent monomerization. Interacts with BLZF1/Golgin 45. Identified in a complex with RAB2 and GORASP2. Interacts with JAM2 and JAM3. Interacts with members of the p24 cargo receptors. Interacts with CNIH and the cytoplasmic domain of transmembrane TGFA, prior its transit in the trans-Golgi. Interacts with KCTD5. Interacts with TMED2 and TMED3. Interacts with SEC16A in response to ER stress. Interacts (via PDZ GRASP-type 1 domain) with core-glycosylated CFTR in response to ER stress. In terms of processing, myristoylated. Myristoylation is essential for the Golgi targeting. Post-translationally, palmitoylated. Phosphorylated in mitotic cells. ER stress-induced phosphorylation at Ser-443 induces monomerization and subsequent relocalization from Golgi to ER which is essential for mediating unconventional (ER/Golgi-independent) trafficking of CFTR to the cell membrane. In terms of tissue distribution, detected in lung, heart and testis. Colocalized in a polarized fashion in the acrosome region with JAM3 in round spermatids (at protein level).

It localises to the golgi apparatus membrane. It is found in the endoplasmic reticulum membrane. Its subcellular location is the golgi apparatus. Its function is as follows. Key structural protein of the Golgi apparatus. The membrane cisternae of the Golgi apparatus adhere to each other to form stacks, which are aligned side by side to form the Golgi ribbon. Acting in concert with GORASP1/GRASP65, is required for the formation and maintenance of the Golgi ribbon, and may be dispensable for the formation of stacks. However, other studies suggest that GORASP2 plays a role in assembly and membrane stacking of the Golgi cisternae, and in the process by which Golgi stacks reform after breakdown during mitosis and meiosis. May regulate the intracellular transport and presentation of a defined set of transmembrane proteins, such as transmembrane TGFA. Required for normal acrosome formation during spermiogenesis and normal male fertility, probably by promoting colocalization of JAM2 and JAM3 at contact sites between germ cells and Sertoli cells. Mediates ER stress-induced unconventional (ER/Golgi-independent) trafficking of core-glycosylated CFTR to cell membrane. The chain is Golgi reassembly-stacking protein 2 (Gorasp2) from Mus musculus (Mouse).